Reading from the N-terminus, the 343-residue chain is Probable transcription factor MYB58 (343 aa).

Positions 1–30 (MARAPGGVRRRSGRRGAGGGGAGGGGEALR) are disordered. A compositionally biased stretch (gly residues) spans 15-27 (RGAGGGGAGGGGE). HTH myb-type domains follow at residues 26 to 78 (GEAL…VNKL) and 79 to 134 (RPNL…KRLA). 2 DNA-binding regions (H-T-H motif) span residues 54–77 (WSSI…WVNK) and 107–130 (WARI…STRQ). Disordered stretches follow at residues 137–169 (LRGP…TATF), 219–238 (PPAD…PPPL), and 307–343 (DDLP…DDVL). The segment covering 157-169 (PSSSSLDSQTATF) has biased composition (polar residues). Over residues 320–336 (QPPPPPPPPPPPSPSPS) the composition is skewed to pro residues.

It localises to the nucleus. Its function is as follows. Probable transcription factor. The chain is Probable transcription factor MYB58 from Oryza sativa subsp. japonica (Rice).